The following is a 441-amino-acid chain: Ribosomal protein uS12 methylthiotransferase RimO (441 aa).

The MTTase N-terminal domain maps to 7-117; that stretch reads PKISFVSLGC…VLEAVHRALP (111 aa). [4Fe-4S] cluster-binding residues include Cys16, Cys52, Cys81, Cys148, Cys152, and Cys155. In terms of domain architecture, Radical SAM core spans 134–371; that stretch reads LTPRHYAYLK…MARQQKISAR (238 aa). Positions 374-440 constitute a TRAM domain; it reads KRKVGTRQQV…AYDLHGTVAG (67 aa).

Belongs to the methylthiotransferase family. RimO subfamily. It depends on [4Fe-4S] cluster as a cofactor.

It is found in the cytoplasm. It catalyses the reaction L-aspartate(89)-[ribosomal protein uS12]-hydrogen + (sulfur carrier)-SH + AH2 + 2 S-adenosyl-L-methionine = 3-methylsulfanyl-L-aspartate(89)-[ribosomal protein uS12]-hydrogen + (sulfur carrier)-H + 5'-deoxyadenosine + L-methionine + A + S-adenosyl-L-homocysteine + 2 H(+). Catalyzes the methylthiolation of an aspartic acid residue of ribosomal protein uS12. In Rhodopseudomonas palustris (strain BisA53), this protein is Ribosomal protein uS12 methylthiotransferase RimO.